A 47-amino-acid chain; its full sequence is Photosystem II reaction center protein K (47 aa).

The propeptide occupies 1–10; that stretch reads MAPLTLDLLA. The chain crosses the membrane as a helical span at residues 26-46; the sequence is LPLIPLLFFLLVFVWQAAVGF.

The protein belongs to the PsbK family. PSII is composed of 1 copy each of membrane proteins PsbA, PsbB, PsbC, PsbD, PsbE, PsbF, PsbH, PsbI, PsbJ, PsbK, PsbL, PsbM, PsbT, PsbX, PsbY, Psb30/Ycf12, peripheral proteins PsbO, CyanoQ (PsbQ), PsbU, PsbV and a large number of cofactors. It forms dimeric complexes.

The protein resides in the cellular thylakoid membrane. Functionally, one of the components of the core complex of photosystem II (PSII). PSII is a light-driven water:plastoquinone oxidoreductase that uses light energy to abstract electrons from H(2)O, generating O(2) and a proton gradient subsequently used for ATP formation. It consists of a core antenna complex that captures photons, and an electron transfer chain that converts photonic excitation into a charge separation. The polypeptide is Photosystem II reaction center protein K (Prochlorococcus marinus (strain SARG / CCMP1375 / SS120)).